A 142-amino-acid chain; its full sequence is Putative pre-16S rRNA nuclease (142 aa).

The protein belongs to the YqgF nuclease family.

The protein resides in the cytoplasm. Could be a nuclease involved in processing of the 5'-end of pre-16S rRNA. The sequence is that of Putative pre-16S rRNA nuclease from Staphylococcus haemolyticus (strain JCSC1435).